A 53-amino-acid polypeptide reads, in one-letter code: Rubredoxin (53 aa).

The 53-residue stretch at 1–53 (MTKYVCTVCGYVYDPEVGDPDNNINPGTSFQDIPEDWVCPLCGVGKDQFEEEA) folds into the Rubredoxin-like domain. Cys-6, Cys-9, Cys-39, and Cys-42 together coordinate Fe cation.

The protein belongs to the rubredoxin family. It depends on Fe(3+) as a cofactor.

Rubredoxin is a small nonheme, iron protein lacking acid-labile sulfide. Its single Fe, chelated to 4 Cys, functions as an electron acceptor and may also stabilize the conformation of the molecule. In Acetoanaerobium sticklandii (strain ATCC 12662 / DSM 519 / JCM 1433 / CCUG 9281 / NCIMB 10654 / HF) (Clostridium sticklandii), this protein is Rubredoxin.